Consider the following 254-residue polypeptide: 5'-nucleotidase SurE (254 aa).

Residues Asp-8, Asp-9, Ser-40, and Asn-93 each coordinate a divalent metal cation.

It belongs to the SurE nucleotidase family. A divalent metal cation is required as a cofactor.

The protein resides in the cytoplasm. It carries out the reaction a ribonucleoside 5'-phosphate + H2O = a ribonucleoside + phosphate. Its function is as follows. Nucleotidase that shows phosphatase activity on nucleoside 5'-monophosphates. The chain is 5'-nucleotidase SurE from Rhizorhabdus wittichii (strain DSM 6014 / CCUG 31198 / JCM 15750 / NBRC 105917 / EY 4224 / RW1) (Sphingomonas wittichii).